Reading from the N-terminus, the 250-residue chain is Proteasome subunit alpha type-4 (250 aa).

This sequence belongs to the peptidase T1A family. As to quaternary structure, the 26S proteasome consists of a 20S proteasome core and two 19S regulatory subunits. The 20S proteasome core is composed of 28 subunits that are arranged in four stacked rings, resulting in a barrel-shaped structure. The two end rings are each formed by seven alpha subunits, and the two central rings are each formed by seven beta subunits. The catalytic chamber with the active sites is on the inside of the barrel.

It is found in the cytoplasm. The protein resides in the nucleus. The proteasome is a multicatalytic proteinase complex which is characterized by its ability to cleave peptides with Arg, Phe, Tyr, Leu, and Glu adjacent to the leaving group at neutral or slightly basic pH. The proteasome has an ATP-dependent proteolytic activity. The protein is Proteasome subunit alpha type-4 (PAC1) of Spinacia oleracea (Spinach).